The following is a 20-amino-acid chain: Citrate synthase (20 aa).

It belongs to the citrate synthase family. Homohexamer.

It catalyses the reaction oxaloacetate + acetyl-CoA + H2O = citrate + CoA + H(+). It participates in carbohydrate metabolism; tricarboxylic acid cycle; isocitrate from oxaloacetate: step 1/2. Its activity is regulated as follows. Allosterically inhibited by NADH. This Streptomyces hygroscopicus protein is Citrate synthase (gltA).